A 952-amino-acid chain; its full sequence is Protocadherin-20 (952 aa).

An N-terminal signal peptide occupies residues methionine 1 to alanine 60. Over serine 61–leucine 891 the chain is Extracellular. Cadherin domains lie at arginine 64–phenylalanine 210, proline 211–phenylalanine 321, isoleucine 322–phenylalanine 536, leucine 537–phenylalanine 640, isoleucine 641–valine 743, and glutamine 747–isoleucine 864. N-linked (GlcNAc...) asparagine glycosylation occurs at asparagine 135. N-linked (GlcNAc...) asparagine glycans are attached at residues asparagine 327 and asparagine 333. Residues asparagine 681, asparagine 749, asparagine 804, asparagine 845, and asparagine 850 are each glycosylated (N-linked (GlcNAc...) asparagine). Residues valine 892–isoleucine 912 traverse the membrane as a helical segment. Residues cysteine 913–isoleucine 952 lie on the Cytoplasmic side of the membrane.

It localises to the cell membrane. Potential calcium-dependent cell-adhesion protein. This is Protocadherin-20 (Pcdh20) from Mus musculus (Mouse).